A 462-amino-acid chain; its full sequence is tRNA modification GTPase MnmE (462 aa).

(6S)-5-formyl-5,6,7,8-tetrahydrofolate contacts are provided by arginine 23, glutamate 86, and lysine 125. In terms of domain architecture, TrmE-type G spans 221-384; that stretch reads GIPVAIVGEP…LKNQLLSFVN (164 aa). Residue asparagine 231 participates in K(+) binding. GTP contacts are provided by residues 231 to 236, 250 to 256, and 275 to 278; these read NVGKST, SEIAGTT, and DTAG. Serine 235 is a binding site for Mg(2+). Residues serine 250, isoleucine 252, and threonine 255 each coordinate K(+). A Mg(2+)-binding site is contributed by threonine 256. Lysine 462 serves as a coordination point for (6S)-5-formyl-5,6,7,8-tetrahydrofolate.

This sequence belongs to the TRAFAC class TrmE-Era-EngA-EngB-Septin-like GTPase superfamily. TrmE GTPase family. In terms of assembly, homodimer. Heterotetramer of two MnmE and two MnmG subunits. The cofactor is K(+).

It is found in the cytoplasm. In terms of biological role, exhibits a very high intrinsic GTPase hydrolysis rate. Involved in the addition of a carboxymethylaminomethyl (cmnm) group at the wobble position (U34) of certain tRNAs, forming tRNA-cmnm(5)s(2)U34. In Flavobacterium psychrophilum (strain ATCC 49511 / DSM 21280 / CIP 103535 / JIP02/86), this protein is tRNA modification GTPase MnmE.